Reading from the N-terminus, the 79-residue chain is Small ribosomal subunit protein bS18 (79 aa).

It belongs to the bacterial ribosomal protein bS18 family. As to quaternary structure, part of the 30S ribosomal subunit. Forms a tight heterodimer with protein bS6.

Functionally, binds as a heterodimer with protein bS6 to the central domain of the 16S rRNA, where it helps stabilize the platform of the 30S subunit. The sequence is that of Small ribosomal subunit protein bS18 from Streptococcus suis (strain 98HAH33).